A 460-amino-acid polypeptide reads, in one-letter code: Decaprenylphosphoryl-beta-D-ribose oxidase (460 aa).

The region spanning 19-193 is the FAD-binding PCMH-type domain; sequence TAPTVASVLS…LRATIEMTPT (175 aa). Residues 52–62, glycine 116, 121–124, 128–131, isoleucine 183, and tyrosine 414 contribute to the FAD site; these read ARGLGRSYGDN, TVGG, and CDIH.

The protein belongs to the DprE1 family. As to quaternary structure, monomer. Interacts with DprE2 to form an epimerase complex.

It is found in the periplasm. It catalyses the reaction trans,octa-cis-decaprenylphospho-beta-D-ribofuranose + FAD + H(+) = trans,octa-cis-decaprenylphospho-beta-D-erythro-pentofuranosid-2-ulose + FADH2. It functions in the pathway cell wall biogenesis; cell wall polysaccharide biosynthesis. With respect to regulation, is inhibited by 8-nitro-benzothiazinones (BTZs) such as BTZ043; BTZs are a new class of antimycobacterial agents that block formation of both cell-wall lipoarabinomannan and arabinogalactan via inhibition of decaprenyl-phospho-arabinose (DPA) synthesis. BTZs are suicide inhibitors that act via covalent modification of DprE1; the essential nitro group of these compounds is reduced by DprE1 to a nitroso group, which then specifically reacts with Cys-386 of DprE1 to form an irreversible semimercaptal adduct. Other compounds with diverse scaffolds (dinitrobenzamides and nitrobenzoquinoxalines) also act as covalent DprE1 inhibitors. Component of the DprE1-DprE2 complex that catalyzes the 2-step epimerization of decaprenyl-phospho-ribose (DPR) to decaprenyl-phospho-arabinose (DPA), a key precursor that serves as the arabinose donor required for the synthesis of cell-wall arabinans. DprE1 catalyzes the first step of epimerization, namely FAD-dependent oxidation of the C2' hydroxyl of DPR to yield the keto intermediate decaprenyl-phospho-2'-keto-D-arabinose (DPX). The intermediate DPX is then transferred to DprE2 subunit of the epimerase complex, most probably through a 'substrate channel' at the interface of DprE1-DprE2 complex. Can also use farnesyl-phosphoryl-beta-D-ribofuranose (FPR) as substrate in vitro. Appears to be essential for the growth of M.smegmatis. The sequence is that of Decaprenylphosphoryl-beta-D-ribose oxidase from Mycolicibacterium smegmatis (strain ATCC 700084 / mc(2)155) (Mycobacterium smegmatis).